Consider the following 347-residue polypeptide: GDT1-like protein 2, chloroplastic (347 aa).

Residues 1 to 12 (MATAISVGVAVP) constitute a chloroplast transit peptide. The segment at 70-97 (EAGSHGEHLDSSATRDSNKPTKPPSGSR) is disordered. The next 7 membrane-spanning stretches (helical) occupy residues 99-119 (PQSI…IVFF), 124-144 (SAVV…LIFV), 165-185 (ALVL…SVII), 196-216 (FQTT…FFGF), 257-277 (LTSP…AEWG), 299-319 (GAIA…AFLA), and 327-347 (VGLI…FGVF).

The protein belongs to the GDT1 family.

The protein localises to the plastid. The protein resides in the chloroplast membrane. The sequence is that of GDT1-like protein 2, chloroplastic from Oryza sativa subsp. japonica (Rice).